The chain runs to 271 residues: Bifunctional protein FolD (271 aa).

NADP(+) contacts are provided by residues glycine 154–serine 156, threonine 181, and isoleucine 222.

This sequence belongs to the tetrahydrofolate dehydrogenase/cyclohydrolase family. In terms of assembly, homodimer.

The enzyme catalyses (6R)-5,10-methylene-5,6,7,8-tetrahydrofolate + NADP(+) = (6R)-5,10-methenyltetrahydrofolate + NADPH. The catalysed reaction is (6R)-5,10-methenyltetrahydrofolate + H2O = (6R)-10-formyltetrahydrofolate + H(+). Its pathway is one-carbon metabolism; tetrahydrofolate interconversion. Functionally, catalyzes the oxidation of 5,10-methylenetetrahydrofolate to 5,10-methenyltetrahydrofolate and then the hydrolysis of 5,10-methenyltetrahydrofolate to 10-formyltetrahydrofolate. The sequence is that of Bifunctional protein FolD from Thermosipho africanus (strain TCF52B).